The chain runs to 256 residues: Histone H1 (256 aa).

Low complexity-rich tracts occupy residues 1-19 (MSDSAVATSASPVAAPPAT) and 27-43 (KKASGSAGTKAKKASAT). 2 disordered regions span residues 1-53 (MSDS…QQMV) and 108-256 (GKGA…AAKK). At Ser11 the chain carries Phosphoserine. One can recognise an H15 domain in the interval 45–119 (SHPPTQQMVD…GASGSFKLSA (75 aa)). Composition is skewed to basic and acidic residues over residues 121–140 (AKKEKDPKAKSKVLSAEKKV) and 176–193 (KTAENKKTEKAKAKDAKK). Residues 194–229 (TGIIKSKPAATKAKVTAAKPKAVVAKASKAKPAVSA) show a composition bias toward low complexity. Over residues 245 to 256 (KKPKAKTTAAKK) the composition is skewed to basic residues.

It belongs to the histone H1/H5 family. Phosphorylated in oocytes during prophase I of meiosis.

It is found in the nucleus. The protein localises to the chromosome. Its function is as follows. Histones H1 are necessary for the condensation of nucleosome chains into higher-order structures. The sequence is that of Histone H1 (His1) from Drosophila melanogaster (Fruit fly).